A 50-amino-acid chain; its full sequence is Large ribosomal subunit protein bL33 (50 aa).

The protein belongs to the bacterial ribosomal protein bL33 family.

This is Large ribosomal subunit protein bL33 from Endomicrobium trichonymphae.